The primary structure comprises 456 residues: tRNA modification GTPase MnmE (456 aa).

(6S)-5-formyl-5,6,7,8-tetrahydrofolate contacts are provided by Arg24, Glu81, and Lys120. One can recognise a TrmE-type G domain in the interval 216–379; the sequence is GMTVVIAGRP…LRDHLKGCMG (164 aa). Asn226 serves as a coordination point for K(+). Residues 226 to 231, 245 to 251, 270 to 273, and 335 to 338 contribute to the GTP site; these read NAGKSS, TDIAGTT, DTAG, and NKAD. Ser230 is a Mg(2+) binding site. K(+)-binding residues include Thr245, Ile247, and Thr250. Thr251 lines the Mg(2+) pocket. Lys456 contacts (6S)-5-formyl-5,6,7,8-tetrahydrofolate.

The protein belongs to the TRAFAC class TrmE-Era-EngA-EngB-Septin-like GTPase superfamily. TrmE GTPase family. Homodimer. Heterotetramer of two MnmE and two MnmG subunits. Requires K(+) as cofactor.

The protein localises to the cytoplasm. Its function is as follows. Exhibits a very high intrinsic GTPase hydrolysis rate. Involved in the addition of a carboxymethylaminomethyl (cmnm) group at the wobble position (U34) of certain tRNAs, forming tRNA-cmnm(5)s(2)U34. The polypeptide is tRNA modification GTPase MnmE (Pseudomonas putida (strain ATCC 47054 / DSM 6125 / CFBP 8728 / NCIMB 11950 / KT2440)).